We begin with the raw amino-acid sequence, 310 residues long: Putative S-adenosyl-L-methionine-dependent methyltransferase MAP_2076c (310 aa).

S-adenosyl-L-methionine-binding positions include Asp-131 and Asp-160–Leu-161.

This sequence belongs to the UPF0677 family.

Exhibits S-adenosyl-L-methionine-dependent methyltransferase activity. The chain is Putative S-adenosyl-L-methionine-dependent methyltransferase MAP_2076c from Mycolicibacterium paratuberculosis (strain ATCC BAA-968 / K-10) (Mycobacterium paratuberculosis).